A 249-amino-acid polypeptide reads, in one-letter code: 1-(5-phosphoribosyl)-5-[(5-phosphoribosylamino)methylideneamino] imidazole-4-carboxamide isomerase (249 aa).

Residue D8 is the Proton acceptor of the active site. D129 (proton donor) is an active-site residue.

The protein belongs to the HisA/HisF family.

It is found in the cytoplasm. It carries out the reaction 1-(5-phospho-beta-D-ribosyl)-5-[(5-phospho-beta-D-ribosylamino)methylideneamino]imidazole-4-carboxamide = 5-[(5-phospho-1-deoxy-D-ribulos-1-ylimino)methylamino]-1-(5-phospho-beta-D-ribosyl)imidazole-4-carboxamide. The protein operates within amino-acid biosynthesis; L-histidine biosynthesis; L-histidine from 5-phospho-alpha-D-ribose 1-diphosphate: step 4/9. In Magnetococcus marinus (strain ATCC BAA-1437 / JCM 17883 / MC-1), this protein is 1-(5-phosphoribosyl)-5-[(5-phosphoribosylamino)methylideneamino] imidazole-4-carboxamide isomerase.